The sequence spans 113 residues: U11-theraphotoxin-Hhn1a (113 aa).

An N-terminal signal peptide occupies residues Met1–Ala21. A propeptide spanning residues Asp22–Arg74 is cleaved from the precursor. 3 cysteine pairs are disulfide-bonded: Cys75–Cys90, Cys82–Cys95, and Cys89–Cys110.

This sequence belongs to the neurotoxin 14 (magi-1) family. 01 (HNTX-16) subfamily. As to expression, expressed by the venom gland.

It localises to the secreted. Probable ion channel inhibitor. The polypeptide is U11-theraphotoxin-Hhn1a (Cyriopagopus hainanus (Chinese bird spider)).